Consider the following 318-residue polypeptide: tRNA U34 carboxymethyltransferase (318 aa).

Carboxy-S-adenosyl-L-methionine-binding positions include lysine 88, tryptophan 102, lysine 107, glycine 126, 176-177 (LE), methionine 192, tyrosine 196, and arginine 311.

The protein belongs to the class I-like SAM-binding methyltransferase superfamily. CmoB family. As to quaternary structure, homotetramer.

The catalysed reaction is carboxy-S-adenosyl-L-methionine + 5-hydroxyuridine(34) in tRNA = 5-carboxymethoxyuridine(34) in tRNA + S-adenosyl-L-homocysteine + H(+). Its function is as follows. Catalyzes carboxymethyl transfer from carboxy-S-adenosyl-L-methionine (Cx-SAM) to 5-hydroxyuridine (ho5U) to form 5-carboxymethoxyuridine (cmo5U) at position 34 in tRNAs. In Pseudomonas putida (strain W619), this protein is tRNA U34 carboxymethyltransferase.